Here is a 420-residue protein sequence, read N- to C-terminus: LanC-like protein 3 (420 aa).

The protein belongs to the LanC-like protein family.

The protein is LanC-like protein 3 (Lancl3) of Mus musculus (Mouse).